Consider the following 398-residue polypeptide: Succinate--CoA ligase [ADP-forming] subunit beta (398 aa).

The 242-residue stretch at 9–250 (KQLFARYGVP…VDEEDPVELQ (242 aa)) folds into the ATP-grasp domain. Residues lysine 50, 57–59 (GRG), glutamate 104, leucine 107, and glutamate 112 each bind ATP. The Mg(2+) site is built by asparagine 205 and aspartate 219. Substrate-binding positions include asparagine 270 and 327–329 (GIM).

Belongs to the succinate/malate CoA ligase beta subunit family. In terms of assembly, heterotetramer of two alpha and two beta subunits. Mg(2+) is required as a cofactor.

It carries out the reaction succinate + ATP + CoA = succinyl-CoA + ADP + phosphate. The enzyme catalyses GTP + succinate + CoA = succinyl-CoA + GDP + phosphate. It participates in carbohydrate metabolism; tricarboxylic acid cycle; succinate from succinyl-CoA (ligase route): step 1/1. Succinyl-CoA synthetase functions in the citric acid cycle (TCA), coupling the hydrolysis of succinyl-CoA to the synthesis of either ATP or GTP and thus represents the only step of substrate-level phosphorylation in the TCA. The beta subunit provides nucleotide specificity of the enzyme and binds the substrate succinate, while the binding sites for coenzyme A and phosphate are found in the alpha subunit. The chain is Succinate--CoA ligase [ADP-forming] subunit beta from Sorangium cellulosum (strain So ce56) (Polyangium cellulosum (strain So ce56)).